A 426-amino-acid chain; its full sequence is MSKSENLYSAARELIPGGVNSPVRAFTGVGGTPLFIEKADGAYLYDVDGKAYIDYVGSWGPMVLGHNHPAIRNAVIEAAERGLSFGAPTEMEVKMAQLVTELVPTMDMVRMVNSGTEATMSAIRLARGFTGRDKIIKFEGCYHGHADCLLVKAGSGALTLGQPNSPGVPADFAKHTLTCTYNDLASVRAAFEQYPQEIACIIVEPVAGNMNCVPPLPEFLPGLRALCDEFGALLIIDEVMTGFRVALAGAQDYYGVEPDLTCLGKIIGGGMPVGAFGGRRDVMDALAPTGPVYQAGTLSGNPIAMAAGFACLNEVAQPGVHETLDELTTRLAEGLLEAAEEAGIPLVVNHVGGMFGIFFTDAESVTCYQDVMACDVERFKRFFHMMLDEGVYLAPSAFEAGFMSVAHSMEDINNTIDAARRVFAKL.

An N6-(pyridoxal phosphate)lysine modification is found at Lys265.

It belongs to the class-III pyridoxal-phosphate-dependent aminotransferase family. HemL subfamily. In terms of assembly, homodimer. It depends on pyridoxal 5'-phosphate as a cofactor.

The protein localises to the cytoplasm. The enzyme catalyses (S)-4-amino-5-oxopentanoate = 5-aminolevulinate. Its pathway is porphyrin-containing compound metabolism; protoporphyrin-IX biosynthesis; 5-aminolevulinate from L-glutamyl-tRNA(Glu): step 2/2. The polypeptide is Glutamate-1-semialdehyde 2,1-aminomutase (Escherichia coli O9:H4 (strain HS)).